We begin with the raw amino-acid sequence, 210 residues long: MFESFNVPGLYIAVQAVLALAASWTSRQVGERTLTGIVIDSGDGVTHVIPVAEGYVIGSCIKHIPIAGRDITYFIQQLLREREVGIPPEQSLETAKAIKEKYCYICPDIVKEFAKYDVDPQKWIKQYTGINAINQKKFVIDVGYERFLGPEIFFHPEFANPDSMESISDVVDEVIQNCPIDVRRPLYKMEQIPLSYPQGHGFHPLSPPFH.

The N-terminal stretch at 1–21 is a signal peptide; sequence MFESFNVPGLYIAVQAVLALA.

It belongs to the actin family. Expressed in kidney, stomach, spleen, bone marrow, uterus, testis, placenta, skeletal muscle, mammary gland, lung, fetal liver, and fetal kidney, but not detected in small intestine, brain, and thymus. Expressed in low-metastatic lung adenocarcinoma cells but not in high-metastatic ones.

In terms of biological role, may play a role in the suppression of metastatic potential in lung adenoma carcinoma cells. This is Actin-related protein 3C (ACTR3C) from Homo sapiens (Human).